Reading from the N-terminus, the 226-residue chain is Exopolysaccharide production protein ExoY (226 aa).

Residues V34–L54 form a helical membrane-spanning segment.

Belongs to the bacterial sugar transferase family.

It localises to the cell membrane. The protein operates within glycan metabolism; exopolysaccharide biosynthesis. Its function is as follows. Needed for the addition of the first sugar (galactose) to the isoprenoid carrier. May function as a sugar transferase. The sequence is that of Exopolysaccharide production protein ExoY (exoY) from Sinorhizobium fredii (strain NBRC 101917 / NGR234).